A 105-amino-acid polypeptide reads, in one-letter code: uncharacterized protein (105 aa).

This is an uncharacterized protein from Schizosaccharomyces pombe (strain 972 / ATCC 24843) (Fission yeast).